The primary structure comprises 222 residues: Ribosomal RNA small subunit methyltransferase G (222 aa).

Residues Gly-82, Leu-87, 132 to 133 (AE), and Arg-150 contribute to the S-adenosyl-L-methionine site.

It belongs to the methyltransferase superfamily. RNA methyltransferase RsmG family.

The protein localises to the cytoplasm. Its function is as follows. Specifically methylates the N7 position of guanine in position 518 of 16S rRNA. In Corynebacterium jeikeium (strain K411), this protein is Ribosomal RNA small subunit methyltransferase G.